A 643-amino-acid polypeptide reads, in one-letter code: Threonine--tRNA ligase (643 aa).

Residues 1–61 (MPTIKFIDGT…TNDSIVKFVY (61 aa)) enclose the TGS domain. The segment at 244-535 (DHRKISKILD…LIEEYIGNFP (292 aa)) is catalytic. 3 residues coordinate Zn(2+): cysteine 335, histidine 386, and histidine 512.

The protein belongs to the class-II aminoacyl-tRNA synthetase family. As to quaternary structure, homodimer. It depends on Zn(2+) as a cofactor.

Its subcellular location is the cytoplasm. The catalysed reaction is tRNA(Thr) + L-threonine + ATP = L-threonyl-tRNA(Thr) + AMP + diphosphate + H(+). Catalyzes the attachment of threonine to tRNA(Thr) in a two-step reaction: L-threonine is first activated by ATP to form Thr-AMP and then transferred to the acceptor end of tRNA(Thr). Also edits incorrectly charged L-seryl-tRNA(Thr). This is Threonine--tRNA ligase from Buchnera aphidicola subsp. Baizongia pistaciae (strain Bp).